The primary structure comprises 77 residues: Exodeoxyribonuclease 7 small subunit (77 aa).

Belongs to the XseB family. As to quaternary structure, heterooligomer composed of large and small subunits.

It localises to the cytoplasm. It catalyses the reaction Exonucleolytic cleavage in either 5'- to 3'- or 3'- to 5'-direction to yield nucleoside 5'-phosphates.. Its function is as follows. Bidirectionally degrades single-stranded DNA into large acid-insoluble oligonucleotides, which are then degraded further into small acid-soluble oligonucleotides. The chain is Exodeoxyribonuclease 7 small subunit from Alkaliphilus oremlandii (strain OhILAs) (Clostridium oremlandii (strain OhILAs)).